We begin with the raw amino-acid sequence, 119 residues long: Ribonuclease P protein component (119 aa).

Belongs to the RnpA family. Consists of a catalytic RNA component (M1 or rnpB) and a protein subunit.

It catalyses the reaction Endonucleolytic cleavage of RNA, removing 5'-extranucleotides from tRNA precursor.. Functionally, RNaseP catalyzes the removal of the 5'-leader sequence from pre-tRNA to produce the mature 5'-terminus. It can also cleave other RNA substrates such as 4.5S RNA. The protein component plays an auxiliary but essential role in vivo by binding to the 5'-leader sequence and broadening the substrate specificity of the ribozyme. The polypeptide is Ribonuclease P protein component (Borreliella burgdorferi (strain ATCC 35210 / DSM 4680 / CIP 102532 / B31) (Borrelia burgdorferi)).